A 103-amino-acid polypeptide reads, in one-letter code: Large ribosomal subunit protein bL21 (103 aa).

Belongs to the bacterial ribosomal protein bL21 family. Part of the 50S ribosomal subunit. Contacts protein L20.

This protein binds to 23S rRNA in the presence of protein L20. The sequence is that of Large ribosomal subunit protein bL21 from Paracidovorax citrulli (strain AAC00-1) (Acidovorax citrulli).